A 228-amino-acid chain; its full sequence is ATP-dependent dethiobiotin synthetase BioD (228 aa).

14 to 19 (DAGKTL) lines the ATP pocket. Position 18 (Thr18) interacts with Mg(2+). Lys39 is a catalytic residue. ATP-binding positions include Asp56, 117 to 120 (EGAG), and 206 to 208 (PRL). The Mg(2+) site is built by Asp56 and Glu117.

This sequence belongs to the dethiobiotin synthetase family. In terms of assembly, homodimer. The cofactor is Mg(2+).

The protein localises to the cytoplasm. The enzyme catalyses (7R,8S)-7,8-diammoniononanoate + CO2 + ATP = (4R,5S)-dethiobiotin + ADP + phosphate + 3 H(+). Its pathway is cofactor biosynthesis; biotin biosynthesis; biotin from 7,8-diaminononanoate: step 1/2. Its function is as follows. Catalyzes a mechanistically unusual reaction, the ATP-dependent insertion of CO2 between the N7 and N8 nitrogen atoms of 7,8-diaminopelargonic acid (DAPA, also called 7,8-diammoniononanoate) to form a ureido ring. The sequence is that of ATP-dependent dethiobiotin synthetase BioD from Cellvibrio japonicus (strain Ueda107) (Pseudomonas fluorescens subsp. cellulosa).